The chain runs to 194 residues: Adenine phosphoribosyltransferase (194 aa).

Belongs to the purine/pyrimidine phosphoribosyltransferase family. As to quaternary structure, homodimer.

It localises to the cytoplasm. The catalysed reaction is AMP + diphosphate = 5-phospho-alpha-D-ribose 1-diphosphate + adenine. Its pathway is purine metabolism; AMP biosynthesis via salvage pathway; AMP from adenine: step 1/1. Its function is as follows. Catalyzes a salvage reaction resulting in the formation of AMP, that is energically less costly than de novo synthesis. In Albidiferax ferrireducens (strain ATCC BAA-621 / DSM 15236 / T118) (Rhodoferax ferrireducens), this protein is Adenine phosphoribosyltransferase.